The primary structure comprises 111 residues: DNA-binding protein MTH_1615 (111 aa).

This sequence belongs to the PDCD5 family.

Its function is as follows. DNA-binding protein which can interact with a randomly chosen 20-mer of double-stranded DNA. This chain is DNA-binding protein MTH_1615, found in Methanothermobacter thermautotrophicus (strain ATCC 29096 / DSM 1053 / JCM 10044 / NBRC 100330 / Delta H) (Methanobacterium thermoautotrophicum).